The primary structure comprises 307 residues: ATP-dependent (S)-NAD(P)H-hydrate dehydratase (307 aa).

Residues 1–291 (MDHFIKLLPK…DEIPKLVRDV (291 aa)) form the YjeF C-terminal domain. Residues Gly-96 and 150–156 (NIVEFSR) each bind (6S)-NADPHX. ATP contacts are provided by residues 194–198 (KGEVD) and 214–223 (SSLRRCGGQG). Residue Asp-224 coordinates (6S)-NADPHX.

This sequence belongs to the NnrD/CARKD family. Mg(2+) is required as a cofactor.

It catalyses the reaction (6S)-NADHX + ATP = ADP + phosphate + NADH + H(+). It carries out the reaction (6S)-NADPHX + ATP = ADP + phosphate + NADPH + H(+). Its function is as follows. Catalyzes the dehydration of the S-form of NAD(P)HX at the expense of ATP, which is converted to ADP. Together with NAD(P)HX epimerase, which catalyzes the epimerization of the S- and R-forms, the enzyme allows the repair of both epimers of NAD(P)HX, a damaged form of NAD(P)H that is a result of enzymatic or heat-dependent hydration. The sequence is that of ATP-dependent (S)-NAD(P)H-hydrate dehydratase from Caenorhabditis elegans.